The sequence spans 218 residues: Sodium channel regulatory subunit beta-1 (218 aa).

A signal peptide spans 1–18 (MGTLLAFVVGAALVSSAW). Residues 19–157 (GGCVEVDSET…DKANRDMASI (139 aa)) lie on the Extracellular side of the membrane. Disulfide bonds link Cys-21–Cys-43 and Cys-40–Cys-121. The 129-residue stretch at 22 to 150 (VEVDSETEAV…KIHLEVVDKA (129 aa)) folds into the Ig-like C2-type domain. Asn-93, Asn-110, Asn-114, and Asn-135 each carry an N-linked (GlcNAc...) asparagine glycan. The chain crosses the membrane as a helical span at residues 158-179 (VSEIMMYVLIVVLTIWLVAEMV). Over 180-218 (YCYKKIAAATEAAAQENASEYLAITSESKENCTGVQVAE) the chain is Cytoplasmic.

This sequence belongs to the sodium channel auxiliary subunit SCN1B (TC 8.A.17) family. In terms of assembly, a voltage-gated sodium (Nav) channel consists of an ion-conducting pore-forming alpha subunit functional on its own that is regulated by one or more beta subunits. Interacts with SCN1A; regulatory subunit of SCN1A/Nav1.1. Interacts with SCN3A; regulatory subunit of SCN3A/Nav1.3. Interacts with SCN4A; regulatory subunit of SCN4A/Nav1.4. Interacts with SCN5A; regulatory subunit of SCN5A/Nav1.5. Interacts with SCN8A; regulatory subunit of SCN8A/Nav1.6. Interacts with SCN9A; regulatory subunit of SCN9A/Nav1.7. Interacts with SCN10A; regulatory subunit of SCN10A/Nav1.8. Interacts with NFASC. Interacts with TMEM65.

Its subcellular location is the cell membrane. The protein localises to the perikaryon. The protein resides in the cell projection. It is found in the axon. Its function is as follows. Regulatory subunit of multiple voltage-gated sodium (Nav) channels directly mediating the depolarization of excitable membranes. Navs, also called VGSCs (voltage-gated sodium channels) or VDSCs (voltage-dependent sodium channels), operate by switching between closed and open conformations depending on the voltage difference across the membrane. In the open conformation they allow Na(+) ions to selectively pass through the pore, along their electrochemical gradient. The influx of Na+ ions provokes membrane depolarization, initiating the propagation of electrical signals throughout cells and tissues. The accessory beta subunits participate in localization and functional modulation of the Nav channels. Modulates the activity of SCN1A/Nav1.1, SCN2A/Nav1.2, SCN3A/Nav1.3, SCN4A/Nav1.4, SCN5A/Nav1.5, SCN8A/Nav1.6, SCN9A/Nav1.7 and SCN10A/Nav1.8. The protein is Sodium channel regulatory subunit beta-1 of Bos taurus (Bovine).